The sequence spans 126 residues: Protein ApaG (126 aa).

The ApaG domain occupies 2–126 (KQLESSIRIE…FRLAAPGLLH (125 aa)).

This is Protein ApaG from Shewanella loihica (strain ATCC BAA-1088 / PV-4).